The primary structure comprises 220 residues: Guanylate kinase (220 aa).

A Guanylate kinase-like domain is found at 16–195 (GLMFVLSSPS…AFESVKAILR (180 aa)). 23-30 (SPSGAGKT) contacts ATP.

It belongs to the guanylate kinase family.

The protein resides in the cytoplasm. The catalysed reaction is GMP + ATP = GDP + ADP. Its function is as follows. Essential for recycling GMP and indirectly, cGMP. The sequence is that of Guanylate kinase from Rhodopseudomonas palustris (strain HaA2).